Reading from the N-terminus, the 101-residue chain is ATP-dependent Clp protease adapter protein ClpS 2 (101 aa).

It belongs to the ClpS family. As to quaternary structure, binds to the N-terminal domain of the chaperone ClpA.

Involved in the modulation of the specificity of the ClpAP-mediated ATP-dependent protein degradation. This Rhizobium meliloti (strain 1021) (Ensifer meliloti) protein is ATP-dependent Clp protease adapter protein ClpS 2.